The sequence spans 283 residues: MTVYAVGDLQGCLEPLKCLLERVAFDPAKDRLWLVGDLVNRGPQSLETLRFLYAMREAVVSVLGNHDLHLLAVAHRSERLKKSDTLREILEAPDREALLDWLRRLPLLHYDEQRQVTLVHAGIPPQWSLEKARLRAAEVEEALRDDQRLPLFLEGMYGNEPAKWDKKLHGIERLRVITNYFTRMRFCTEDGRLDLKSKEGLDTAPPGYAPWFSFASRKTRGEKIIFGHWAALEGQCDEPGLFALDTGCVWGAKMTLLNVDSGERLSCDCAGQQASAKPAGPPA.

It belongs to the Ap4A hydrolase family.

It carries out the reaction P(1),P(4)-bis(5'-adenosyl) tetraphosphate + H2O = 2 ADP + 2 H(+). Its function is as follows. Hydrolyzes diadenosine 5',5'''-P1,P4-tetraphosphate to yield ADP. In Pseudomonas paraeruginosa (strain DSM 24068 / PA7) (Pseudomonas aeruginosa (strain PA7)), this protein is Bis(5'-nucleosyl)-tetraphosphatase, symmetrical.